Reading from the N-terminus, the 305-residue chain is MGDETIKVAILGSGNIGTDLMYKLLDCPASMELVLLAGIDPNSEGLARARALGVAASAQGIDAVLEHPDIQIVFDATSAKAHVRHAKLLRETGRTAIDLTPAARGPYVVPPVNLRQHLDAPNVNLITCGGQATIPLVYAVSRVTPVRYAEIVSTVASRSAGPGTRQNIDEFTFTTAHGLEVIGGAQQGKAIIILNPAEPPILMRNTVYALPEDDFDPAQVRDSIEAMVAEVQQYVPGYRLKNPPVFDMRDTPWGRKSAVTVLLEVEGAGHFLPTYAGNLDIMTASARRVGDVFARHLLSRREVAV.

13-16 (SGNI) provides a ligand contact to NAD(+). The Acyl-thioester intermediate role is filled by Cys-128. Residues 159–167 (SAGPGTRQN) and Asn-278 contribute to the NAD(+) site.

Belongs to the acetaldehyde dehydrogenase family.

It carries out the reaction acetaldehyde + NAD(+) + CoA = acetyl-CoA + NADH + H(+). The protein is Acetaldehyde dehydrogenase of Roseiflexus castenholzii (strain DSM 13941 / HLO8).